Reading from the N-terminus, the 272-residue chain is Eukaryotic translation initiation factor 3 subunit G (272 aa).

2 disordered regions span residues 1–28 (MPALDEIKSSWADEVELDSGSLPPPTEI) and 157–188 (APTTAKSGKYVPPSMRDSQKPGMGGNPRGRDD). An RRM domain is found at 190 to 268 (TAIRISNLSE…LILNVEWSKP (79 aa)).

Belongs to the eIF-3 subunit G family. In terms of assembly, component of the eukaryotic translation initiation factor 3 (eIF-3) complex.

It is found in the cytoplasm. Its function is as follows. RNA-binding component of the eukaryotic translation initiation factor 3 (eIF-3) complex, which is involved in protein synthesis of a specialized repertoire of mRNAs and, together with other initiation factors, stimulates binding of mRNA and methionyl-tRNAi to the 40S ribosome. The eIF-3 complex specifically targets and initiates translation of a subset of mRNAs involved in cell proliferation. This subunit can bind 18S rRNA. This Aedes aegypti (Yellowfever mosquito) protein is Eukaryotic translation initiation factor 3 subunit G.